The primary structure comprises 473 residues: Chromosomal replication initiator protein DnaA (473 aa).

The tract at residues Met1–Gln73 is domain I, interacts with DnaA modulators. The interval Gln73–Ser129 is domain II. Positions Pro130 to Ser352 are domain III, AAA+ region. The ATP site is built by Gly177, Gly179, Lys180, and Thr181. The interval Lys353–Glu473 is domain IV, binds dsDNA.

This sequence belongs to the DnaA family. In terms of assembly, oligomerizes as a right-handed, spiral filament on DNA at oriC.

The protein localises to the cytoplasm. Functionally, plays an essential role in the initiation and regulation of chromosomal replication. ATP-DnaA binds to the origin of replication (oriC) to initiate formation of the DNA replication initiation complex once per cell cycle. Binds the DnaA box (a 9 base pair repeat at the origin) and separates the double-stranded (ds)DNA. Forms a right-handed helical filament on oriC DNA; dsDNA binds to the exterior of the filament while single-stranded (ss)DNA is stabiized in the filament's interior. The ATP-DnaA-oriC complex binds and stabilizes one strand of the AT-rich DNA unwinding element (DUE), permitting loading of DNA polymerase. After initiation quickly degrades to an ADP-DnaA complex that is not apt for DNA replication. Binds acidic phospholipids. The sequence is that of Chromosomal replication initiator protein DnaA from Rhodopseudomonas palustris (strain BisB18).